Reading from the N-terminus, the 232-residue chain is Sugar fermentation stimulation protein homolog (232 aa).

This sequence belongs to the SfsA family.

This Acidithiobacillus ferrooxidans (strain ATCC 23270 / DSM 14882 / CIP 104768 / NCIMB 8455) (Ferrobacillus ferrooxidans (strain ATCC 23270)) protein is Sugar fermentation stimulation protein homolog.